Consider the following 105-residue polypeptide: MRSSLKPVLSNLRFNSTIASESLRFHVSRTPSKNLPVYLDYKQRGTKILTLIRKIHGDSNALRLRLISTLKMSPKDVYVNKLTNQVVLKGNHIVTVREWLQDQGF.

Residues 1–15 constitute a mitochondrion transit peptide; it reads MRSSLKPVLSNLRFN.

This sequence belongs to the mitochondrion-specific ribosomal protein mL49 family. As to quaternary structure, component of the mitochondrial large ribosomal subunit (mt-LSU). Mature yeast 74S mitochondrial ribosomes consist of a small (37S) and a large (54S) subunit. The 37S small subunit contains a 15S ribosomal RNA (15S mt-rRNA) and at least 32 different proteins. The 54S large subunit contains a 21S rRNA (21S mt-rRNA) and at least 45 different proteins.

It localises to the mitochondrion. Component of the mitochondrial ribosome (mitoribosome), a dedicated translation machinery responsible for the synthesis of mitochondrial genome-encoded proteins, including at least some of the essential transmembrane subunits of the mitochondrial respiratory chain. The mitoribosomes are attached to the mitochondrial inner membrane and translation products are cotranslationally integrated into the membrane. The protein is Large ribosomal subunit protein mL49 (img2) of Schizosaccharomyces pombe (strain 972 / ATCC 24843) (Fission yeast).